Consider the following 121-residue polypeptide: Small ribosomal subunit protein uS10 (121 aa).

At Ser2 the chain carries N-acetylserine. Residues Lys6, Lys8, Lys21, Lys32, and Lys101 each participate in a glycyl lysine isopeptide (Lys-Gly) (interchain with G-Cter in ubiquitin) cross-link.

Belongs to the universal ribosomal protein uS10 family. In terms of assembly, component of the small ribosomal subunit (SSU). Mature yeast ribosomes consist of a small (40S) and a large (60S) subunit. The 40S small subunit contains 1 molecule of ribosomal RNA (18S rRNA) and 33 different proteins (encoded by 57 genes). The large 60S subunit contains 3 rRNA molecules (25S, 5.8S and 5S rRNA) and 46 different proteins (encoded by 81 genes). Ubiquitinated at Lys-6 and Lys-8 by HEL2, to activate the ribosome quality control (RQC) pathway in response to stalled ribosomes. Post-translationally, N-terminally acetylated by acetyltransferase NatA. Also partially acetylated by NatC.

The protein resides in the cytoplasm. Component of the ribosome, a large ribonucleoprotein complex responsible for the synthesis of proteins in the cell. The small ribosomal subunit (SSU) binds messenger RNAs (mRNAs) and translates the encoded message by selecting cognate aminoacyl-transfer RNA (tRNA) molecules. The large subunit (LSU) contains the ribosomal catalytic site termed the peptidyl transferase center (PTC), which catalyzes the formation of peptide bonds, thereby polymerizing the amino acids delivered by tRNAs into a polypeptide chain. The nascent polypeptides leave the ribosome through a tunnel in the LSU and interact with protein factors that function in enzymatic processing, targeting, and the membrane insertion of nascent chains at the exit of the ribosomal tunnel. The chain is Small ribosomal subunit protein uS10 from Saccharomyces cerevisiae (strain ATCC 204508 / S288c) (Baker's yeast).